A 153-amino-acid chain; its full sequence is Aspartate carbamoyltransferase regulatory chain (153 aa).

Zn(2+) contacts are provided by Cys109, Cys114, Cys138, and Cys141.

It belongs to the PyrI family. In terms of assembly, contains catalytic and regulatory chains. Requires Zn(2+) as cofactor.

In terms of biological role, involved in allosteric regulation of aspartate carbamoyltransferase. The sequence is that of Aspartate carbamoyltransferase regulatory chain from Wigglesworthia glossinidia brevipalpis.